Reading from the N-terminus, the 126-residue chain is Large ribosomal subunit protein bL12 (126 aa).

This sequence belongs to the bacterial ribosomal protein bL12 family. Homodimer. Part of the ribosomal stalk of the 50S ribosomal subunit. Forms a multimeric L10(L12)X complex, where L10 forms an elongated spine to which 2 to 4 L12 dimers bind in a sequential fashion. Binds GTP-bound translation factors.

Functionally, forms part of the ribosomal stalk which helps the ribosome interact with GTP-bound translation factors. Is thus essential for accurate translation. This chain is Large ribosomal subunit protein bL12, found in Desulfatibacillum aliphaticivorans.